Reading from the N-terminus, the 508-residue chain is Ras association domain-containing protein 10 (508 aa).

Residues 1–133 enclose the Ras-associating domain; that stretch reads MDPSEKKISV…VRFVLVRSEA (133 aa). 2 disordered regions span residues 51–81 and 186–221; these read RRGL…AMPP and KLNR…ESAS. The span at 66–78 shows a compositional bias: acidic residues; the sequence is EPPDENDEDDDDA. Positions 195–214 are enriched in low complexity; that stretch reads PSSPCSSTSSSTASSCSSSA. 2 coiled-coil regions span residues 235–266 and 319–358; these read QDHT…DRMR and LEEL…NQRW. Residues 473–508 form a disordered region; the sequence is GLAKSCPGNDEDSDTGLSSMHSQDSDSVPPVCESLV. The span at 487 to 498 shows a compositional bias: polar residues; that stretch reads TGLSSMHSQDSD.

As to expression, expressed in neural progenitor cells (at protein level).

It is found in the cytoplasm. It localises to the cytosol. The protein localises to the cytoskeleton. The protein resides in the microtubule organizing center. Its subcellular location is the centrosome. It is found in the spindle pole. Functionally, plays an important role in regulating embryonic neurogenesis. The chain is Ras association domain-containing protein 10 (Rassf10) from Mus musculus (Mouse).